The sequence spans 320 residues: NAD kinase (320 aa).

Asp-96 (proton acceptor) is an active-site residue. Residues 96 to 97 (DG), Arg-101, 170 to 171 (NE), Asp-200, and 211 to 216 (TAYAFS) each bind NAD(+).

The protein belongs to the NAD kinase family. A divalent metal cation serves as cofactor.

The protein localises to the cytoplasm. The enzyme catalyses NAD(+) + ATP = ADP + NADP(+) + H(+). Involved in the regulation of the intracellular balance of NAD and NADP, and is a key enzyme in the biosynthesis of NADP. Catalyzes specifically the phosphorylation on 2'-hydroxyl of the adenosine moiety of NAD to yield NADP. The sequence is that of NAD kinase from Rhodococcus jostii (strain RHA1).